Here is a 241-residue protein sequence, read N- to C-terminus: DnaJ homolog subfamily C member 4 (241 aa).

The J domain occupies 34–99; it reads TYYELLGVHP…QSRRSYDDQL (66 aa). Positions 88 to 99 are enriched in basic and acidic residues; it reads REQSRRSYDDQL. Positions 88 to 129 are disordered; the sequence is REQSRRSYDDQLRSGSPPKSPRTTVHDKSAHQTHSSWTPPNA. Polar residues predominate over residues 119 to 129; the sequence is QTHSSWTPPNA. The chain crosses the membrane as a helical span at residues 156–175; it reads VLGYCLLLMLAGMGLHYIAF. A disordered region spans residues 212 to 241; it reads QQERQRLGQRQPPPSEPTQGPEIVPRGAGP.

Its subcellular location is the membrane. This chain is DnaJ homolog subfamily C member 4 (DNAJC4), found in Homo sapiens (Human).